We begin with the raw amino-acid sequence, 522 residues long: Amine oxidase [flavin-containing] (522 aa).

Over 1-492 (MTAQNTFDVI…FWERNLPSVG (492 aa)) the chain is Cytoplasmic. Cysteine 399 carries the S-8alpha-FAD cysteine modification. A helical; Anchor for type IV membrane protein membrane pass occupies residues 493–513 (GFINFLAASVLSVATAAGMLA). Residues 514–522 (YQKGLLTRS) lie on the Mitochondrial intermembrane side of the membrane.

The protein belongs to the flavin monoamine oxidase family. Requires FAD as cofactor.

The protein localises to the mitochondrion outer membrane. The enzyme catalyses a secondary aliphatic amine + O2 + H2O = a primary amine + an aldehyde + H2O2. Functionally, catalyzes the oxidative deamination of biogenic and xenobiotic amines and has important functions in the metabolism of neuroactive and vasoactive amines in the central nervous system and peripheral tissues. Oxidizes both 5-hydroxytryptamine (5-HT) and beta-phenylethylamine (PEA). The polypeptide is Amine oxidase [flavin-containing] (mao) (Oncorhynchus mykiss (Rainbow trout)).